A 372-amino-acid polypeptide reads, in one-letter code: Ephrin type-A receptor 8 (372 aa).

Positions 2–263 (IHIEKIIGSG…HVVSVLEALV (262 aa)) constitute a Protein kinase domain. ATP contacts are provided by residues 8–16 (IGSGESGEV) and lysine 34. The Proton acceptor role is filled by aspartate 127. Tyrosine 206 bears the Phosphotyrosine; by autocatalysis mark. The SAM domain occupies 297 to 372 (NGDLTVGDWL…SCTQGPRRHL (76 aa)). The PDZ-binding signature appears at 370 to 372 (RHL).

As to quaternary structure, heterotetramer upon binding of the ligand. The heterotetramer is composed of an ephrin dimer and a receptor dimer. Oligomerization is probably required to induce biological responses. May also form heterodimers with other ephrin receptors. Interacts with FYN; possible downstream effector of EPHA8 in regulation of cell adhesion. Interacts with PIK3CG; regulates integrin-mediated cell adhesion to substrate. Interacts with TIAM1; regulates clathrin-mediated endocytosis of EPHA8. Interacts with ANKS1A and ANKS1B; EPHA8 kinase activity-independent but stimulated by EPHA8 ubiquitination. Post-translationally, phosphorylated. Phosphorylation is stimulated upon binding of its ligands including EFNA2, EFNA3 and EFNA5. Autophosphorylation on Tyr-206 modulates tyrosine kinase activity. Ubiquitinated. Ubiquitination by CBL regulates the receptor stability and activity through proteasomal degradation. ANKS1A prevents ubiquitination and degradation. As to expression, most abundant in brain.

The protein localises to the cell membrane. Its subcellular location is the cell projection. It is found in the early endosome membrane. The enzyme catalyses L-tyrosyl-[protein] + ATP = O-phospho-L-tyrosyl-[protein] + ADP + H(+). In terms of biological role, receptor tyrosine kinase which binds promiscuously GPI-anchored ephrin-A family ligands residing on adjacent cells, leading to contact-dependent bidirectional signaling into neighboring cells. The signaling pathway downstream of the receptor is referred to as forward signaling while the signaling pathway downstream of the ephrin ligand is referred to as reverse signaling. The GPI-anchored ephrin-A EFNA2, EFNA3, and EFNA5 are able to activate EPHA8 through phosphorylation. With EFNA5 may regulate integrin-mediated cell adhesion and migration on fibronectin substrate but also neurite outgrowth. During development of the nervous system also plays a role in axon guidance. Downstream effectors of the EPHA8 signaling pathway include FYN which promotes cell adhesion upon activation by EPHA8 and the MAP kinases in the stimulation of neurite outgrowth. The chain is Ephrin type-A receptor 8 (Epha8) from Rattus norvegicus (Rat).